Reading from the N-terminus, the 482-residue chain is Complement C1r subcomponent-like protein (482 aa).

An N-terminal signal peptide occupies residues 1–43 (MSGFRGLVPELENSLWSSPTTSCMSKMCWWLLWGILHTCPTQA). In terms of domain architecture, CUB spans 44 to 166 (SVLLAQQSPQ…KGFLALYQAV (123 aa)). Disulfide bonds link cysteine 97–cysteine 115 and cysteine 190–cysteine 223. A Sushi domain is found at 166-225 (VAVNQPNGDTEAVTTPGAPKIQNHCQDPYYKADQTGTLSCPSSWKWKDRQDGGEVPECVP). In terms of domain architecture, Peptidase S1 spans 240–479 (TFGSSRAKLG…YMDWIKRVIE (240 aa)). Active-site charge relay system residues include histidine 278 and aspartate 334. Asparagine 358 is a glycosylation site (N-linked (GlcNAc...) asparagine). Intrachain disulfides connect cysteine 397–cysteine 416 and cysteine 427–cysteine 457. Serine 431 acts as the Charge relay system in catalysis.

This sequence belongs to the peptidase S1 family. In terms of tissue distribution, expressed in liver (at protein level).

It is found in the secreted. Functionally, mediates the proteolytic cleavage of HP/haptoglobin in the endoplasmic reticulum. The chain is Complement C1r subcomponent-like protein (C1rl) from Mus musculus (Mouse).